A 585-amino-acid polypeptide reads, in one-letter code: tRNA 5-methylaminomethyl-2-thiouridine biosynthesis bifunctional protein MnmC (585 aa).

Residues 1 to 236 are tRNA (mnm(5)s(2)U34)-methyltransferase; sequence MTPDGLYCDP…KRERLEAVWP (236 aa). The segment at 254–585 is FAD-dependent cmnm(5)s(2)U34 oxidoreductase; it reads LGAGIAGASL…SRRAGQGAAG (332 aa). Positions 564–585 are disordered; the sequence is EAMAPGRFAERRSRRAGQGAAG.

This sequence in the N-terminal section; belongs to the methyltransferase superfamily. tRNA (mnm(5)s(2)U34)-methyltransferase family. The protein in the C-terminal section; belongs to the DAO family. FAD is required as a cofactor.

Its subcellular location is the cytoplasm. The catalysed reaction is 5-aminomethyl-2-thiouridine(34) in tRNA + S-adenosyl-L-methionine = 5-methylaminomethyl-2-thiouridine(34) in tRNA + S-adenosyl-L-homocysteine + H(+). Functionally, catalyzes the last two steps in the biosynthesis of 5-methylaminomethyl-2-thiouridine (mnm(5)s(2)U) at the wobble position (U34) in tRNA. Catalyzes the FAD-dependent demodification of cmnm(5)s(2)U34 to nm(5)s(2)U34, followed by the transfer of a methyl group from S-adenosyl-L-methionine to nm(5)s(2)U34, to form mnm(5)s(2)U34. This Maricaulis maris (strain MCS10) (Caulobacter maris) protein is tRNA 5-methylaminomethyl-2-thiouridine biosynthesis bifunctional protein MnmC.